Reading from the N-terminus, the 513-residue chain is Type-2 serine--tRNA ligase (513 aa).

Alanine 312 provides a ligand contact to L-serine. Cysteine 314 lines the Zn(2+) pocket. Position 344 (arginine 344) interacts with L-serine. Residues 344 to 346 and 355 to 356 each bind ATP; these read RWE and RV. 361-363 contributes to the L-serine binding site; it reads RVE. Residues glutamate 363 and cysteine 467 each contribute to the Zn(2+) site. Arginine 474 lines the ATP pocket.

The protein belongs to the class-II aminoacyl-tRNA synthetase family. Type-2 seryl-tRNA synthetase subfamily. As to quaternary structure, homodimer. Requires Zn(2+) as cofactor.

Its subcellular location is the cytoplasm. The catalysed reaction is tRNA(Ser) + L-serine + ATP = L-seryl-tRNA(Ser) + AMP + diphosphate + H(+). The enzyme catalyses tRNA(Sec) + L-serine + ATP = L-seryl-tRNA(Sec) + AMP + diphosphate + H(+). It participates in aminoacyl-tRNA biosynthesis; selenocysteinyl-tRNA(Sec) biosynthesis; L-seryl-tRNA(Sec) from L-serine and tRNA(Sec): step 1/1. Catalyzes the attachment of serine to tRNA(Ser). Is also able to aminoacylate tRNA(Sec) with serine, to form the misacylated tRNA L-seryl-tRNA(Sec), which will be further converted into selenocysteinyl-tRNA(Sec). The protein is Type-2 serine--tRNA ligase (serS) of Methanothermobacter thermautotrophicus (strain ATCC 29096 / DSM 1053 / JCM 10044 / NBRC 100330 / Delta H) (Methanobacterium thermoautotrophicum).